Consider the following 58-residue polypeptide: uncharacterized protein (58 aa).

It localises to the plastid. The protein localises to the chloroplast. This is an uncharacterized protein from Pyropia yezoensis (Susabi-nori).